Here is a 267-residue protein sequence, read N- to C-terminus: tRNA (guanine-N(1)-)-methyltransferase (267 aa).

S-adenosyl-L-methionine contacts are provided by residues G112 and 131-136; that span reads IGDYIL. Residues 245–259 show a composition bias toward basic and acidic residues; that stretch reads DRRKEKNSYEDEFNR. The disordered stretch occupies residues 245-267; the sequence is DRRKEKNSYEDEFNRRNYKRSTS.

This sequence belongs to the RNA methyltransferase TrmD family. Homodimer.

It is found in the cytoplasm. It catalyses the reaction guanosine(37) in tRNA + S-adenosyl-L-methionine = N(1)-methylguanosine(37) in tRNA + S-adenosyl-L-homocysteine + H(+). Specifically methylates guanosine-37 in various tRNAs. The protein is tRNA (guanine-N(1)-)-methyltransferase of Spiroplasma kunkelii.